Reading from the N-terminus, the 577-residue chain is Sensor histidine kinase YesM (577 aa).

The Cytoplasmic segment spans residues 1–17 (MKKRVAGWYRRMKIKDK). A helical membrane pass occupies residues 18 to 38 (LFVFLSLIMAVSFLFVYSGVQ). At 39–286 (YAFHVYDEQI…PFDQMFAKIS (248 aa)) the chain is on the extracellular side. Residues 287–307 (FMKTVIGTCFLLFFCVVLLFG) form a helical membrane-spanning segment. The Cytoplasmic segment spans residues 308-577 (RKIANSITEP…ITIPCRNEVV (270 aa)). In terms of domain architecture, HAMP spans 312–368 (NSITEPIEQLVTAMKSVQHSGIEAGVSLSLPEHTQDEAGMLNRHFTVMMKRINELME). The region spanning 365-574 (ELMEENVEKQ…RIVITIPCRN (210 aa)) is the Histidine kinase domain. A Phosphohistidine; by autocatalysis modification is found at histidine 392.

It localises to the cell membrane. It catalyses the reaction ATP + protein L-histidine = ADP + protein N-phospho-L-histidine.. In terms of biological role, member of the two-component regulatory system YesM/YesN. Probably activates YesN by phosphorylation. This is Sensor histidine kinase YesM (yesM) from Bacillus subtilis (strain 168).